A 1488-amino-acid chain; its full sequence is Chromosome partition protein MukB (1488 aa).

34–41 is an ATP binding site; sequence GGNGAGKS. 3 coiled-coil regions span residues 326 to 418, 444 to 472, and 509 to 602; these read LEAD…QYNQ, LDTFQAKEQEATEKLLSLEQKMSVAQTAH, and RHLA…QRAP. The flexible hinge stretch occupies residues 666 to 783; sequence PGGAEDQRLN…SLPIFGRAAR (118 aa). 3 coiled-coil regions span residues 835–923, 977–1116, and 1209–1265; these read EAEI…AKLE, EMLS…AKAG, and VEAI…LQSV. The disordered stretch occupies residues 1049–1074; sequence ADSGAEERARQRRDELHAQLSNNRSR. A compositionally biased stretch (basic and acidic residues) spans 1051-1065; sequence SGAEERARQRRDELH.

The protein belongs to the SMC family. MukB subfamily. As to quaternary structure, homodimerization via its hinge domain. Binds to DNA via its C-terminal region. Interacts, and probably forms a ternary complex, with MukE and MukF via its C-terminal region. The complex formation is stimulated by calcium or magnesium. Interacts with tubulin-related protein FtsZ.

Its subcellular location is the cytoplasm. It localises to the nucleoid. Functionally, plays a central role in chromosome condensation, segregation and cell cycle progression. Functions as a homodimer, which is essential for chromosome partition. Involved in negative DNA supercoiling in vivo, and by this means organize and compact chromosomes. May achieve or facilitate chromosome segregation by condensation DNA from both sides of a centrally located replisome during cell division. This chain is Chromosome partition protein MukB, found in Salmonella gallinarum (strain 287/91 / NCTC 13346).